The following is a 78-amino-acid chain: Neurogranin (78 aa).

An N-acetylmethionine modification is found at Met1. The IQ domain occupies 26-49; that stretch reads ANAAAAKIQASFRGHMARKKIKSG. Phosphoserine; by PHK and PKC is present on Ser36. The segment at 38–78 is disordered; sequence RGHMARKKIKSGERGRKGPGPGGPGGAGGARGGAGGGPSGD. Positions 50–78 constitute a Collagen-like domain; that stretch reads ERGRKGPGPGGPGGAGGARGGAGGGPSGD. A compositionally biased stretch (gly residues) spans 55 to 78; that stretch reads GPGPGGPGGAGGARGGAGGGPSGD. The residue at position 68 (Arg68) is a Citrulline; partial. Arg68 carries the omega-N-methylarginine modification.

Belongs to the neurogranin family. The N-terminus is blocked. In terms of processing, phosphorylated at Ser-36 by PHK and PKC. Phosphorylation prevents interaction with Calmodulin and interrupts several learning- and memory-associated functions. In terms of tissue distribution, is highly enriched in brain. Accumulates postsynaptically in dendritic spines of neostriatal neurons.

Its function is as follows. Acts as a 'third messenger' substrate of protein kinase C-mediated molecular cascades during synaptic development and remodeling. Binds to calmodulin in the absence of calcium. The protein is Neurogranin (NRGN) of Bos taurus (Bovine).